The primary structure comprises 258 residues: Phosphatidylglycerol--prolipoprotein diacylglyceryl transferase (258 aa).

A run of 7 helical transmembrane segments spans residues 9–29 (ILIQ…ATGF), 53–73 (LLTY…TLIY), 90–110 (EGGL…WLFV), 117–139 (KFLW…IRLG), 169–189 (PVQL…LMLF), 198–218 (GFLF…IEYF), and 230–250 (LISV…VLML). Arg137 is a binding site for a 1,2-diacyl-sn-glycero-3-phospho-(1'-sn-glycerol).

The protein belongs to the Lgt family.

It localises to the cell inner membrane. It carries out the reaction L-cysteinyl-[prolipoprotein] + a 1,2-diacyl-sn-glycero-3-phospho-(1'-sn-glycerol) = an S-1,2-diacyl-sn-glyceryl-L-cysteinyl-[prolipoprotein] + sn-glycerol 1-phosphate + H(+). It functions in the pathway protein modification; lipoprotein biosynthesis (diacylglyceryl transfer). In terms of biological role, catalyzes the transfer of the diacylglyceryl group from phosphatidylglycerol to the sulfhydryl group of the N-terminal cysteine of a prolipoprotein, the first step in the formation of mature lipoproteins. This chain is Phosphatidylglycerol--prolipoprotein diacylglyceryl transferase, found in Tolumonas auensis (strain DSM 9187 / NBRC 110442 / TA 4).